Consider the following 620-residue polypeptide: Tyrosine-protein kinase ITK/TSK (620 aa).

The 108-residue stretch at 4–111 (FILLEEQLIK…WVLALKEETR (108 aa)) folds into the PH domain. The Btk-type zinc-finger motif lies at 113–149 (NNSLVPKYHPNFWMDGKWRCCSQLEKLATGCAQYDPT). Positions 121, 132, 133, and 143 each coordinate Zn(2+). In terms of domain architecture, SH3 spans 171 to 231 (PEETVVIALY…PSSYLVEKSP (61 aa)). Position 180 is a phosphotyrosine; by autocatalysis (Tyr-180). One can recognise an SH2 domain in the interval 239–338 (WYNKSISRDK…GLVTRLRYPV (100 aa)). The region spanning 363-615 (LTFVQEIGSG…SRLLRQLAEI (253 aa)) is the Protein kinase domain. Residues 369 to 377 (IGSGQFGLV) and Lys-391 each bind ATP. Asp-482 acts as the Proton acceptor in catalysis. Position 512 is a phosphotyrosine; by LCK (Tyr-512). Residue Ser-565 is modified to Phosphoserine.

The protein belongs to the protein kinase superfamily. Tyr protein kinase family. TEC subfamily. As to quaternary structure, homooligomerizes; this association negatively regulates kinase activity. Interacts with PPIA/CYPA; this interaction regulates TCR signal strength via a proline-directed conformational switch in ITK. Interacts with THEMIS. Interacts with FASLG. Interacts with VAV1; this interaction is important for VAV1 localization and TCR-induced actin polarization. Interacts with TBX21. Requires Zn(2+) as cofactor. Phosphorylated at Tyr-512 in the activation loop of the kinase domain by LCK. Subsequent autophosphorylation at Tyr-180 leads to the kinase activation. The autophosphorylated Tyr-180 lies within the substrate binding sequence of the SH3 domain. In terms of processing, ubiquitinated. As to expression, T-cell lines and natural killer cell lines.

It is found in the cytoplasm. The protein localises to the nucleus. The catalysed reaction is L-tyrosyl-[protein] + ATP = O-phospho-L-tyrosyl-[protein] + ADP + H(+). Its function is as follows. Tyrosine kinase that plays an essential role in regulation of the adaptive immune response. Regulates the development, function and differentiation of conventional T-cells and nonconventional NKT-cells. When antigen presenting cells (APC) activate T-cell receptor (TCR), a series of phosphorylation lead to the recruitment of ITK to the cell membrane, in the vicinity of the stimulated TCR receptor, where it is phosphorylated by LCK. Phosphorylation leads to ITK autophosphorylation and full activation. Once activated, phosphorylates PLCG1, leading to the activation of this lipase and subsequent cleavage of its substrates. In turn, the endoplasmic reticulum releases calcium in the cytoplasm and the nuclear activator of activated T-cells (NFAT) translocates into the nucleus to perform its transcriptional duty. Phosphorylates 2 essential adapter proteins: the linker for activation of T-cells/LAT protein and LCP2. Then, a large number of signaling molecules such as VAV1 are recruited and ultimately lead to lymphokine production, T-cell proliferation and differentiation. Required for TCR-mediated calcium response in gamma-delta T-cells, may also be involved in the modulation of the transcriptomic signature in the Vgamma2-positive subset of immature gamma-delta T-cells. Phosphorylates TBX21 at 'Tyr-530' and mediates its interaction with GATA3. The sequence is that of Tyrosine-protein kinase ITK/TSK (ITK) from Homo sapiens (Human).